A 688-amino-acid chain; its full sequence is Elongation factor G (688 aa).

In terms of domain architecture, tr-type G spans Asp-8–Leu-282. Residues Ala-17–Thr-24, Asp-81–His-85, and Asn-135–Asp-138 contribute to the GTP site.

It belongs to the TRAFAC class translation factor GTPase superfamily. Classic translation factor GTPase family. EF-G/EF-2 subfamily.

The protein localises to the cytoplasm. Its function is as follows. Catalyzes the GTP-dependent ribosomal translocation step during translation elongation. During this step, the ribosome changes from the pre-translocational (PRE) to the post-translocational (POST) state as the newly formed A-site-bound peptidyl-tRNA and P-site-bound deacylated tRNA move to the P and E sites, respectively. Catalyzes the coordinated movement of the two tRNA molecules, the mRNA and conformational changes in the ribosome. This chain is Elongation factor G, found in Clostridium botulinum (strain Alaska E43 / Type E3).